The primary structure comprises 299 residues: Glycine--tRNA ligase alpha subunit (299 aa).

It belongs to the class-II aminoacyl-tRNA synthetase family. Tetramer of two alpha and two beta subunits.

The protein resides in the cytoplasm. It catalyses the reaction tRNA(Gly) + glycine + ATP = glycyl-tRNA(Gly) + AMP + diphosphate. The sequence is that of Glycine--tRNA ligase alpha subunit from Laribacter hongkongensis (strain HLHK9).